Here is a 102-residue protein sequence, read N- to C-terminus: Urease subunit beta (102 aa).

It belongs to the urease beta subunit family. As to quaternary structure, heterotrimer of UreA (gamma), UreB (beta) and UreC (alpha) subunits. Three heterotrimers associate to form the active enzyme.

It localises to the cytoplasm. It catalyses the reaction urea + 2 H2O + H(+) = hydrogencarbonate + 2 NH4(+). Its pathway is nitrogen metabolism; urea degradation; CO(2) and NH(3) from urea (urease route): step 1/1. This chain is Urease subunit beta, found in Trichodesmium erythraeum (strain IMS101).